Here is a 69-residue protein sequence, read N- to C-terminus: YPPKPETPGSNASPEDWASYQAAVRHYVNLITRQRYGXXSSPEEAVAWLLFKADPSQDIEPRLDDDNAW.

It belongs to the NPY family.

The protein resides in the secreted. This is Pancreatic propolypeptide YG from Lophius americanus (American angler).